The sequence spans 225 residues: Putative O-phosphotransferase MT2714 (225 aa).

Residue Gly-30–Thr-37 participates in ATP binding.

It to S.violaceus chloramphenicol 3-O phosphotransferase.

The polypeptide is Putative O-phosphotransferase MT2714 (Mycobacterium tuberculosis (strain CDC 1551 / Oshkosh)).